A 1827-amino-acid polypeptide reads, in one-letter code: Laminin subunit beta-4 (1827 aa).

Positions 1-21 (MLLRLELSALLLLLIAAPVRL) are cleaved as a signal peptide. Residues 26–266 (VGNSCYPNLG…ALYEMVVRGS (241 aa)) form the Laminin N-terminal domain. Asn231 is a glycosylation site (N-linked (GlcNAc...) asparagine). 19 cysteine pairs are disulfide-bonded: Cys267/Cys276, Cys269/Cys297, Cys299/Cys308, Cys311/Cys331, Cys334/Cys343, Cys336/Cys361, Cys364/Cys373, Cys376/Cys394, Cys397/Cys410, Cys399/Cys417, Cys419/Cys428, Cys431/Cys446, Cys449/Cys463, Cys451/Cys470, Cys472/Cys481, Cys484/Cys498, Cys501/Cys513, Cys503/Cys520, and Cys522/Cys531. Laminin EGF-like domains follow at residues 267 to 333 (CFCN…VCKR), 334 to 396 (CNCH…ACIP), 397 to 448 (CDCD…GCQL), and 449 to 500 (CRCN…GCIP). Residues 501-544 (CDCDIGGALKTECSSVDGQCKCRPNMVGQKCNDPAPGYFLAPLD) form the Laminin EGF-like 5; truncated domain. The Laminin IV type B domain occupies 540–847 (LAPLDFYIYE…LIGSMSAFIH (308 aa)). 32 cysteine pairs are disulfide-bonded: Cys853/Cys865, Cys855/Cys872, Cys874/Cys883, Cys886/Cys898, Cys901/Cys913, Cys903/Cys920, Cys922/Cys931, Cys934/Cys944, Cys947/Cys956, Cys949/Cys963, Cys966/Cys975, Cys978/Cys992, Cys995/Cys1011, Cys997/Cys1022, Cys1024/Cys1033, Cys1036/Cys1051, Cys1054/Cys1068, Cys1056/Cys1075, Cys1078/Cys1087, Cys1090/Cys1103, Cys1106/Cys1126, Cys1108/Cys1133, Cys1135/Cys1144, Cys1147/Cys1160, Cys1163/Cys1175, Cys1165/Cys1182, Cys1184/Cys1193, Cys1196/Cys1208, Cys1211/Cys1223, Cys1213/Cys1230, Cys1232/Cys1241, and Cys1244/Cys1255. Laminin EGF-like domains are found at residues 853 to 900 (CNCH…GCSP), 901 to 946 (CDCD…LCRR), 947 to 994 (CQCN…PCEP), 995 to 1053 (CLCP…RCKE), 1054 to 1105 (CCCN…DCKE), 1106 to 1162 (CSCD…GCQP), 1163 to 1210 (CNCN…QCMF), and 1211 to 1257 (CDCN…ACEP). Asn1001 carries N-linked (GlcNAc...) asparagine glycosylation. Positions 1258-1449 (CHACNHLWEK…LSAANINEEV (192 aa)) are domain II. 2 coiled-coil regions span residues 1294–1335 (ELQH…EIID) and 1385–1449 (NKIK…NEEV). Asn1329 carries an N-linked (GlcNAc...) asparagine glycan. The tract at residues 1450–1476 (CGAPGDAECEKAKCGGALCGKCGGPDC) is domain alpha. Positions 1477-1827 (TGSLPISLNA…KVQRYNLCSP (351 aa)) are domain I. Asn1485, Asn1496, Asn1513, Asn1533, Asn1599, Asn1629, Asn1644, Asn1672, Asn1686, Asn1702, Asn1726, Asn1745, Asn1750, and Asn1761 each carry an N-linked (GlcNAc...) asparagine glycan. 2 coiled-coil regions span residues 1485–1554 (NASK…EKVK) and 1584–1820 (DEIK…DKVQ).

As to quaternary structure, laminin is a complex glycoprotein, consisting of three different polypeptide chains (alpha, beta, gamma), which are bound to each other by disulfide bonds into a cross-shaped molecule comprising one long and three short arms with globules at each end.

The protein resides in the secreted. The protein localises to the extracellular space. It is found in the extracellular matrix. Its subcellular location is the basement membrane. Binding to cells via a high affinity receptor, laminin is thought to mediate the attachment, migration and organization of cells into tissues during embryonic development by interacting with other extracellular matrix components. Positively regulates apical-basal distribution of Muller glia cells in the retina. The protein is Laminin subunit beta-4 (lamb4) of Danio rerio (Zebrafish).